Consider the following 223-residue polypeptide: Probable transaldolase (223 aa).

Lys91 functions as the Schiff-base intermediate with substrate in the catalytic mechanism.

This sequence belongs to the transaldolase family. Type 3B subfamily.

The protein localises to the cytoplasm. It catalyses the reaction D-sedoheptulose 7-phosphate + D-glyceraldehyde 3-phosphate = D-erythrose 4-phosphate + beta-D-fructose 6-phosphate. It participates in carbohydrate degradation; pentose phosphate pathway; D-glyceraldehyde 3-phosphate and beta-D-fructose 6-phosphate from D-ribose 5-phosphate and D-xylulose 5-phosphate (non-oxidative stage): step 2/3. Transaldolase is important for the balance of metabolites in the pentose-phosphate pathway. The polypeptide is Probable transaldolase (Chlorobium phaeobacteroides (strain BS1)).